The sequence spans 916 residues: Isoleucine--tRNA ligase (916 aa).

The 'HIGH' region signature appears at 57 to 67 (PYANGNLHMGH). Glutamate 554 contributes to the L-isoleucyl-5'-AMP binding site. The 'KMSKS' region signature appears at 595-599 (KMSKS). Lysine 598 is a binding site for ATP. Cysteine 885, cysteine 888, cysteine 905, and cysteine 908 together coordinate Zn(2+).

Belongs to the class-I aminoacyl-tRNA synthetase family. IleS type 1 subfamily. Monomer. Zn(2+) is required as a cofactor.

It localises to the cytoplasm. The enzyme catalyses tRNA(Ile) + L-isoleucine + ATP = L-isoleucyl-tRNA(Ile) + AMP + diphosphate. In terms of biological role, catalyzes the attachment of isoleucine to tRNA(Ile). As IleRS can inadvertently accommodate and process structurally similar amino acids such as valine, to avoid such errors it has two additional distinct tRNA(Ile)-dependent editing activities. One activity is designated as 'pretransfer' editing and involves the hydrolysis of activated Val-AMP. The other activity is designated 'posttransfer' editing and involves deacylation of mischarged Val-tRNA(Ile). The chain is Isoleucine--tRNA ligase from Staphylococcus haemolyticus (strain JCSC1435).